The following is a 2004-amino-acid chain: Alpha-2-macroglobulin homolog (2004 aa).

The first 27 residues, 1-27 (MLCCLVFKGLLSMDLLRFLLISPFALI), serve as a signal peptide directing secretion.

Belongs to the protease inhibitor I39 (alpha-2-macroglobulin) family. Bacterial alpha-2-macroglobulin subfamily.

This is Alpha-2-macroglobulin homolog from Yersinia pestis.